Consider the following 246-residue polypeptide: Sugar fermentation stimulation protein homolog (246 aa).

This sequence belongs to the SfsA family.

In Prochlorococcus marinus (strain MIT 9215), this protein is Sugar fermentation stimulation protein homolog.